We begin with the raw amino-acid sequence, 539 residues long: Probable protein kinase UbiB (539 aa).

The region spanning 125–493 (RFDVEPLASA…RRRQGDRWAL (369 aa)) is the Protein kinase domain. Residues 131–139 (LASASVAQV) and lysine 153 each bind ATP. The active-site Proton acceptor is the aspartate 288. 2 consecutive transmembrane segments (helical) span residues 495–515 (LLGA…AEAA) and 517–537 (LAAP…YLIV).

The protein belongs to the ABC1 family. UbiB subfamily.

It is found in the cell inner membrane. Its pathway is cofactor biosynthesis; ubiquinone biosynthesis [regulation]. Is probably a protein kinase regulator of UbiI activity which is involved in aerobic coenzyme Q (ubiquinone) biosynthesis. This chain is Probable protein kinase UbiB, found in Pseudomonas putida (strain W619).